The sequence spans 534 residues: MFS transporter fmqE (534 aa).

Transmembrane regions (helical) follow at residues 48 to 68, 109 to 129, 136 to 156, 169 to 189, 194 to 214, 228 to 248, 326 to 346, 349 to 369, 379 to 399, 407 to 427, 447 to 467, and 478 to 498; these read LLLF…VCAS, LWTS…GFLA, WTAV…VFSS, GAVV…VAPI, ALLQ…LGIV, IVFG…FLVP, AIGV…GLNV, VFDI…LGWL, LWLW…ALGF, LAIA…TVGV, VAFI…PYMY, and TGFV…FLVP.

The protein belongs to the major facilitator superfamily. Sugar transporter (TC 2.A.1.1) family.

The protein resides in the cytoplasmic vesicle membrane. MFS transporter; part of the gene cluster that mediates the biosynthesis of the antitumor cytotoxic peptidyl alkaloids fumiquinazolines that confer a dual-usage capability to defend against phagocytes in the environment and animal hosts. Probably involved in fumiquinazolines metabolism and transport. The polypeptide is MFS transporter fmqE (Aspergillus fumigatus (strain ATCC MYA-4609 / CBS 101355 / FGSC A1100 / Af293) (Neosartorya fumigata)).